We begin with the raw amino-acid sequence, 78 residues long: Spermatid-specific protein T1 (78 aa).

The interval 1 to 21 is hydrophobic; that stretch reads MKVAANSSKMLAEKLELMKGG. Residues 1-78 are disordered; the sequence is MKVAANSSKM…YSRRRYRRRR (78 aa). Basic residues predominate over residues 20 to 78; it reads GGRRRRRRSRRRRRRSRRRSRSPYRRRYRRRRRRRRRRSRRRRYRRRRSYSRRRYRRRR.

Post-translationally, phosphorylation occurs at different degrees. The triphosphorylated form may be predominant in T1. SP1 appears to be phosphorylated in elongated spermatids, but dephosphorylated in mature sperm cells. As to expression, testis.

It is found in the nucleus. It localises to the chromosome. Functionally, cuttlefish spermiogenesis is characterized by a double nuclear protein transition: histones -&gt; spermatid-specific proteins (T1/T2) -&gt; protamines (SP1/SP2). The protamines compact sperm DNA into a highly condensed, stable and inactive complex. The protein is Spermatid-specific protein T1 of Sepia officinalis (Common cuttlefish).